A 142-amino-acid polypeptide reads, in one-letter code: Large ribosomal subunit protein uL13 (142 aa).

Belongs to the universal ribosomal protein uL13 family. In terms of assembly, part of the 50S ribosomal subunit.

This protein is one of the early assembly proteins of the 50S ribosomal subunit, although it is not seen to bind rRNA by itself. It is important during the early stages of 50S assembly. This Bordetella bronchiseptica (strain ATCC BAA-588 / NCTC 13252 / RB50) (Alcaligenes bronchisepticus) protein is Large ribosomal subunit protein uL13.